We begin with the raw amino-acid sequence, 177 residues long: RNA pyrophosphohydrolase (177 aa).

The 144-residue stretch at glycine 6–lysine 149 folds into the Nudix hydrolase domain. Positions glycine 38 to glycine 59 match the Nudix box motif.

Belongs to the Nudix hydrolase family. RppH subfamily. A divalent metal cation serves as cofactor.

Accelerates the degradation of transcripts by removing pyrophosphate from the 5'-end of triphosphorylated RNA, leading to a more labile monophosphorylated state that can stimulate subsequent ribonuclease cleavage. The protein is RNA pyrophosphohydrolase of Edwardsiella ictaluri (strain 93-146).